The primary structure comprises 1011 residues: METSSMLSSLNDECKSDNYIEPHYKEWYRVAIDILIEHGLEAYQEFLVQERVSDFLAEEEINYILKNVQKVAQSTAHGTDDSCDDTLSSGTYWPVESDVEAPNLDLGWPYVMPGLLGGTHIDLLFHPPRAHLLTIKETIRKMIKEARKVIALVMDIFTDVDIFKEIVEASTRGVSVYILLDESNFNHFLNMTEKQGCSVQRLRNIRVRTVKGQDYLSKTGAKFHGKMEQKFLLVDCQKVMYGSYSYMWSFEKAHLSMVQIITGQLVESFDEEFRTLYARSCVPSSFAQEESARVKHGKALWENGTYQHSVSSLASVSSQRNLFGRQDKIHKLDSSYFKNRGIYTLNEHDKYNIRSHGYKPHFVPNFNGPNAIRQFQPNQINENWKRHSYAGEQPETVPYLLLNRALNRTNNPPGNWKKPSDSLSVASSSREGYVSHHNTPAQSFANRLAQRKTTNLADRNSNVRRSFNGTDNHIRFLQQRMPTLEHTTKSFLRNWRIESYLNDHSEATPDSNGSALGDRFEGYDNPENLKANALYTHSRLRSSLVFKPTLPEQKEVNSCTTGSSNSTIIGSQGSETPKEVPDTPTNVQHLTDKPLPESIPKLPLQSEAPKMHTLQVPENHSVALNQTTNGHTESNNYIYKTLGVNKQTENLKNQQTENLLKRRSFPLFDNSKANLDPGNSKHYVYSTLTRNRVRQPEKPKEDLLKSSKSMHNVTHNLEEDEEEVTKRNSPSGTTTKSVSIAALLDVNKEESNKELASKKEVKGSPSFLKKGSQKLRSLLSLTPDKKENLSKNKAPAFYRLCSSSDTLVSEGEENQKPKKSDTKVDSSPRRKHSSSSNSQGSIHKSKEDVTVSPSQEINAPPDENKRTPSPGPVESKFLERAGDASAPRFNTEQIQYRDSREINAVVTPERRPTSSPRPTSSELLRSHSTDRRVYSRFEPFCKIESSIQPTSNMPNTSINRPEIKSATMGNSYGRSSPLLNYNTGVYRSYQPNENKFRGFMQKFGNFIHKNK.

The segment at 1 to 283 (METSSMLSSL…RTLYARSCVP (283 aa)) is DUF1669. The tract at residues 1–284 (METSSMLSSL…TLYARSCVPS (284 aa)) is required for interaction with RAF1 and for the function. 5 positions are modified to phosphoserine: S334, S422, S424, S466, and S543. The tract at residues 555 to 585 (EVNSCTTGSSNSTIIGSQGSETPKEVPDTPT) is disordered. Positions 557 to 574 (NSCTTGSSNSTIIGSQGS) are enriched in low complexity. The residue at position 664 (S664) is a Phosphoserine. 2 disordered regions span residues 691-738 (NRVR…TKSV) and 750-769 (ESNKELASKKEVKGSPSFLK). The segment covering 694-705 (RQPEKPKEDLLK) has biased composition (basic and acidic residues). 2 stretches are compositionally biased toward polar residues: residues 706-715 (SSKSMHNVTH) and 727-738 (RNSPSGTTTKSV). Positions 750-762 (ESNKELASKKEVK) are enriched in basic and acidic residues. T782 carries the phosphothreonine modification. S802 bears the Phosphoserine mark. The tract at residues 807 to 928 (LVSEGEENQK…TSSELLRSHS (122 aa)) is disordered. Residues 813–828 (ENQKPKKSDTKVDSSP) are compositionally biased toward basic and acidic residues. A phosphoserine mark is found at S852, S869, and S915. Positions 913–923 (TSSPRPTSSEL) are enriched in low complexity.

The protein belongs to the FAM83 family. In terms of assembly, interacts with EGFR; positively regulates EGFR inducing its autophosphorylation in absence of stimulation by EGF. Interacts with RAF1; displaces 14-3-3 proteins from RAF1 and activates RAF1 within the RAS/MAPK signaling cascade. Interacts with AKT1, PIK3CA and PIK3R1; activates the PI3K/AKT signaling cascade. Directly interacts (via DUF1669) with casein kinase isoforms CSNK1A1, CSNK1A1L, CSNK1D and CSNK1E. In terms of processing, phosphorylated in vitro by CSNK1A1.

Its subcellular location is the cytoplasm. It localises to the membrane. In terms of biological role, probable proto-oncogene that functions in the epidermal growth factor receptor/EGFR signaling pathway. Activates both the EGFR itself and downstream RAS/MAPK and PI3K/AKT/TOR signaling cascades. The sequence is that of Protein FAM83B from Homo sapiens (Human).